The primary structure comprises 339 residues: Nicotinate-nucleotide--dimethylbenzimidazole phosphoribosyltransferase (339 aa).

The active-site Proton acceptor is the Glu306.

This sequence belongs to the CobT family.

It carries out the reaction 5,6-dimethylbenzimidazole + nicotinate beta-D-ribonucleotide = alpha-ribazole 5'-phosphate + nicotinate + H(+). Its pathway is nucleoside biosynthesis; alpha-ribazole biosynthesis; alpha-ribazole from 5,6-dimethylbenzimidazole: step 1/2. Its function is as follows. Catalyzes the synthesis of alpha-ribazole-5'-phosphate from nicotinate mononucleotide (NAMN) and 5,6-dimethylbenzimidazole (DMB). This is Nicotinate-nucleotide--dimethylbenzimidazole phosphoribosyltransferase from Brucella canis (strain ATCC 23365 / NCTC 10854 / RM-666).